A 388-amino-acid chain; its full sequence is S-adenosylmethionine synthase (388 aa).

Histidine 16 contributes to the ATP binding site. Position 18 (aspartate 18) interacts with Mg(2+). Glutamate 44 lines the K(+) pocket. Residues glutamate 57 and glutamine 100 each contribute to the L-methionine site. Positions 100–110 (QSPDIAQGVDK) are flexible loop. Residues 167–169 (DAK), 233–234 (RF), aspartate 242, 248–249 (RK), alanine 265, and lysine 269 contribute to the ATP site. Aspartate 242 provides a ligand contact to L-methionine. Lysine 273 contributes to the L-methionine binding site.

The protein belongs to the AdoMet synthase family. In terms of assembly, homotetramer; dimer of dimers. Requires Mg(2+) as cofactor. It depends on K(+) as a cofactor.

The protein resides in the cytoplasm. The enzyme catalyses L-methionine + ATP + H2O = S-adenosyl-L-methionine + phosphate + diphosphate. The protein operates within amino-acid biosynthesis; S-adenosyl-L-methionine biosynthesis; S-adenosyl-L-methionine from L-methionine: step 1/1. Its function is as follows. Catalyzes the formation of S-adenosylmethionine (AdoMet) from methionine and ATP. The overall synthetic reaction is composed of two sequential steps, AdoMet formation and the subsequent tripolyphosphate hydrolysis which occurs prior to release of AdoMet from the enzyme. This chain is S-adenosylmethionine synthase, found in Polynucleobacter necessarius subsp. necessarius (strain STIR1).